The primary structure comprises 153 residues: 6,7-dimethyl-8-ribityllumazine synthase (153 aa).

Residues phenylalanine 22, 56 to 58 (AFE), and 80 to 82 (TVI) contribute to the 5-amino-6-(D-ribitylamino)uracil site. 85–86 (ST) contacts (2S)-2-hydroxy-3-oxobutyl phosphate. Histidine 88 acts as the Proton donor in catalysis. Residue phenylalanine 113 coordinates 5-amino-6-(D-ribitylamino)uracil. Arginine 127 lines the (2S)-2-hydroxy-3-oxobutyl phosphate pocket.

The protein belongs to the DMRL synthase family. As to quaternary structure, forms an icosahedral capsid composed of 60 subunits, arranged as a dodecamer of pentamers.

It catalyses the reaction (2S)-2-hydroxy-3-oxobutyl phosphate + 5-amino-6-(D-ribitylamino)uracil = 6,7-dimethyl-8-(1-D-ribityl)lumazine + phosphate + 2 H2O + H(+). It participates in cofactor biosynthesis; riboflavin biosynthesis; riboflavin from 2-hydroxy-3-oxobutyl phosphate and 5-amino-6-(D-ribitylamino)uracil: step 1/2. Functionally, catalyzes the formation of 6,7-dimethyl-8-ribityllumazine by condensation of 5-amino-6-(D-ribitylamino)uracil with 3,4-dihydroxy-2-butanone 4-phosphate. This is the penultimate step in the biosynthesis of riboflavin. In Actinobacillus pleuropneumoniae serotype 3 (strain JL03), this protein is 6,7-dimethyl-8-ribityllumazine synthase.